The primary structure comprises 612 residues: MSQHQPPPVFDSTSFLKNVTKLPGVYQMYDADGAILYVGKAKNLKNRLSSYFRATGLTPKTHALVKRIQAIEVTVTPSEAEALVLEHNLIKSQKPPFNILLRDDKSFPYIFISEGEPYPKLAFHRGPKKKKGQYFGPFPNASAVKETLNFLQRTFRVRQCEDSVFRSRTRPCLQYQIGRCTGPCVEAISVEDYAVDLAHTAMFLDGKSEVLQQELQVEMEQASQALDFERAVVVRDQITDLRQVQAQQVMEAGYSNQDVVACASESGVHCIHILYVRQGRIVGSKSYLPKTKLDSTEEDVLSAFLAHHYLGGAAMDVPPHIIISHKLADQLIIGEAVEKATGKQLKLTHNVRTYRAKWLAMALEAARQNLKNHLNNKQTLVARFESLQDILGLDETPNRIECFDISHSSGELTVGSCVVFDQNGAKKSDYRRFNIEGIKAGDDYAAMEQVLTRRYTRLQKESSSMPDLVLIDGGKGQLSKAKAVVEELGIHDMMLIGVAKGTTRKPGFETLVLTSGAERVLKADSAALHLIQQIRDEAHRFAITGHKQRRDKKRRTSVLEGIPGVGPKRRKELLVHFGGLQEVLRANVDDLAKAPSISKKMAQEIYNVLHSE.

The 79-residue stretch at 21–99 (KLPGVYQMYD…IKSQKPPFNI (79 aa)) folds into the GIY-YIG domain. The 36-residue stretch at 209–244 (EVLQQELQVEMEQASQALDFERAVVVRDQITDLRQV) folds into the UVR domain.

It belongs to the UvrC family. In terms of assembly, interacts with UvrB in an incision complex.

It is found in the cytoplasm. In terms of biological role, the UvrABC repair system catalyzes the recognition and processing of DNA lesions. UvrC both incises the 5' and 3' sides of the lesion. The N-terminal half is responsible for the 3' incision and the C-terminal half is responsible for the 5' incision. The protein is UvrABC system protein C of Saccharophagus degradans (strain 2-40 / ATCC 43961 / DSM 17024).